We begin with the raw amino-acid sequence, 644 residues long: Threonine--tRNA ligase (644 aa).

In terms of domain architecture, TGS spans 3–64; sequence EMIRITFPDG…QEDGSISIIT (62 aa). A catalytic region spans residues 245–542; the sequence is DHRKLGKELE…LIEEYKGAFP (298 aa). 3 residues coordinate Zn(2+): cysteine 338, histidine 389, and histidine 519.

The protein belongs to the class-II aminoacyl-tRNA synthetase family. Homodimer. The cofactor is Zn(2+).

Its subcellular location is the cytoplasm. The catalysed reaction is tRNA(Thr) + L-threonine + ATP = L-threonyl-tRNA(Thr) + AMP + diphosphate + H(+). Functionally, catalyzes the attachment of threonine to tRNA(Thr) in a two-step reaction: L-threonine is first activated by ATP to form Thr-AMP and then transferred to the acceptor end of tRNA(Thr). Also edits incorrectly charged L-seryl-tRNA(Thr). This is Threonine--tRNA ligase from Geobacillus sp. (strain WCH70).